A 99-amino-acid chain; its full sequence is Large ribosomal subunit protein bL21 (99 aa).

Belongs to the bacterial ribosomal protein bL21 family. In terms of assembly, part of the 50S ribosomal subunit. Contacts protein L20.

This protein binds to 23S rRNA in the presence of protein L20. The chain is Large ribosomal subunit protein bL21 from Mesoplasma florum (strain ATCC 33453 / NBRC 100688 / NCTC 11704 / L1) (Acholeplasma florum).